Consider the following 130-residue polypeptide: ATP synthase epsilon chain (130 aa).

Belongs to the ATPase epsilon chain family. As to quaternary structure, F-type ATPases have 2 components, CF(1) - the catalytic core - and CF(0) - the membrane proton channel. CF(1) has five subunits: alpha(3), beta(3), gamma(1), delta(1), epsilon(1). CF(0) has three main subunits: a, b and c.

It is found in the cell inner membrane. In terms of biological role, produces ATP from ADP in the presence of a proton gradient across the membrane. This chain is ATP synthase epsilon chain, found in Sulfurimonas denitrificans (strain ATCC 33889 / DSM 1251) (Thiomicrospira denitrificans (strain ATCC 33889 / DSM 1251)).